A 242-amino-acid chain; its full sequence is N-glycosylase/DNA lyase (242 aa).

The 8-oxoguanine site is built by Q26, S53, and W64. The tract at residues 120–184 is helix-hairpin-helix; sequence EGYYKNMKML…EDLRIKSVTS (65 aa). K144 (schiff-base intermediate with DNA) is an active-site residue. Residues F148 and P174 each contribute to the 8-oxoguanine site. Residue D176 is part of the active site. 8-oxoguanine contacts are provided by D210 and W214.

Belongs to the archaeal N-glycosylase/DNA lyase (AGOG) family.

It carries out the reaction 2'-deoxyribonucleotide-(2'-deoxyribose 5'-phosphate)-2'-deoxyribonucleotide-DNA = a 3'-end 2'-deoxyribonucleotide-(2,3-dehydro-2,3-deoxyribose 5'-phosphate)-DNA + a 5'-end 5'-phospho-2'-deoxyribonucleoside-DNA + H(+). DNA repair enzyme that is part of the base excision repair (BER) pathway; protects from oxidative damage by removing the major product of DNA oxidation, 8-oxoguanine (GO), from single- and double-stranded DNA substrates. The chain is N-glycosylase/DNA lyase from Pyrococcus furiosus (strain ATCC 43587 / DSM 3638 / JCM 8422 / Vc1).